A 317-amino-acid chain; its full sequence is MAQEYLDFELPIAELEAKIESLRSVASQDDEINLDDEIARLQKKSAELTKKTFANLDAWQVSKMARHPNRPYTLDYIERIFTEFEELAGDRAFADDKAIVGGLARLDGKPVMVIGHQKGRSVKDKVKRNFGMPAPEGYRKALRLMQMAERFNLPIITFIDTPGAYPGVGAEERGQSEAIARNLREMSTLKVPVICTVIGEGGSGGALAIGVGDKVNMLQYSTYSVISPEGCASILWKSAEKASTAAEVMGLTANRLKELNLIDSIIEEPLGGAHRDFDAMAHNLKQRLLDDLKELEMLDEDNLLHRRYNRLMDYGYC.

The CoA carboxyltransferase C-terminal domain maps to 33 to 294 (NLDDEIARLQ…KQRLLDDLKE (262 aa)).

The protein belongs to the AccA family. As to quaternary structure, acetyl-CoA carboxylase is a heterohexamer composed of biotin carboxyl carrier protein (AccB), biotin carboxylase (AccC) and two subunits each of ACCase subunit alpha (AccA) and ACCase subunit beta (AccD).

The protein resides in the cytoplasm. The catalysed reaction is N(6)-carboxybiotinyl-L-lysyl-[protein] + acetyl-CoA = N(6)-biotinyl-L-lysyl-[protein] + malonyl-CoA. It functions in the pathway lipid metabolism; malonyl-CoA biosynthesis; malonyl-CoA from acetyl-CoA: step 1/1. Functionally, component of the acetyl coenzyme A carboxylase (ACC) complex. First, biotin carboxylase catalyzes the carboxylation of biotin on its carrier protein (BCCP) and then the CO(2) group is transferred by the carboxyltransferase to acetyl-CoA to form malonyl-CoA. The sequence is that of Acetyl-coenzyme A carboxylase carboxyl transferase subunit alpha from Pasteurella multocida (strain Pm70).